We begin with the raw amino-acid sequence, 369 residues long: MTATDPAPTRPIWLADDKKRVQIIDQRMLPHNLVIVDLTTVDQVIEAIGEMMVRGAPLIGVTGAFGVFIAVQNALERGDFEAQVRKECLRIKEARPTAVNLAWGVDRVCAAVFSKTLPADCLAAALAEASAIAEEEVDNCRRIGVHGVGLIETISRQKGGKTVNVLTHCNAGWLACVEHGTATAPIYKAFEKRIDIHVWVDETRPLNQGARLTAWELGQRGVAHTVITDNAGGHLMQHGMVDMVIVGTDRSTYTGDVANKVGTYLKALAARDNNIPFYVALPSSTFDWEMTDGLAQIPIEERNPDEVRCVEGLCPDGRVEKVRIVPENSRAANYAFDVTPARLVTGFITERGVCGAGRDQVLALFPEKR.

Substrate-binding positions include 54–56, Arg95, and Gln208; that span reads RGA. Asp249 serves as the catalytic Proton donor. 259–260 is a binding site for substrate; the sequence is NK.

It belongs to the eIF-2B alpha/beta/delta subunits family. MtnA subfamily.

The enzyme catalyses 5-(methylsulfanyl)-alpha-D-ribose 1-phosphate = 5-(methylsulfanyl)-D-ribulose 1-phosphate. It participates in amino-acid biosynthesis; L-methionine biosynthesis via salvage pathway; L-methionine from S-methyl-5-thio-alpha-D-ribose 1-phosphate: step 1/6. Functionally, catalyzes the interconversion of methylthioribose-1-phosphate (MTR-1-P) into methylthioribulose-1-phosphate (MTRu-1-P). In Desulfosudis oleivorans (strain DSM 6200 / JCM 39069 / Hxd3) (Desulfococcus oleovorans), this protein is Methylthioribose-1-phosphate isomerase.